Reading from the N-terminus, the 117-residue chain is Large ribosomal subunit protein bL20 (117 aa).

The protein belongs to the bacterial ribosomal protein bL20 family.

Functionally, binds directly to 23S ribosomal RNA and is necessary for the in vitro assembly process of the 50S ribosomal subunit. It is not involved in the protein synthesizing functions of that subunit. This Synechocystis sp. (strain ATCC 27184 / PCC 6803 / Kazusa) protein is Large ribosomal subunit protein bL20 (rplT).